We begin with the raw amino-acid sequence, 284 residues long: Ribosome-associated protein oga1 (284 aa).

Residues 1–284 (MSVASKNLFD…LSETDFPALA (284 aa)) are disordered. Basic and acidic residues predominate over residues 22–36 (TEKKTAASRDKKRSD). Residues Ser37 and Ser51 each carry the phosphoserine modification. Basic and acidic residues-rich tracts occupy residues 52–73 (RKRD…ADQP) and 119–141 (GREF…ERGW). Thr160 is subject to Phosphothreonine. Ser162 carries the post-translational modification Phosphoserine. The residue at position 166 (Thr166) is a Phosphothreonine. Composition is skewed to basic and acidic residues over residues 172-186 (ENVK…ERKS) and 194-209 (TVEK…KSAP). Low complexity predominate over residues 214–224 (ASLKKSASQKK). The segment covering 226–237 (AAKESKPKKVLL) has biased composition (basic and acidic residues). Residues 245-254 (ARPARGGRPN) show a composition bias toward low complexity. A compositionally biased stretch (polar residues) spans 263–277 (ETASKTQQAPPTLSE).

The protein belongs to the STM1 family. As to quaternary structure, associates with mature 80S ribosomes. Binds to the head domain of the 40S ribosomal subunit and prevents mRNA binding by inserting its alpha-helix domain towards the mRNA entry tunnel at the decoding site, where it blocks the binding of tRNA and mRNA at the A- and P-sites. Interacts with eEF2; interaction sequesters eEF2 at the A-site of the ribosome, thereby blocking the interaction sites of the mRNA-tRNA complex, promoting ribosome stabilization and hibernation. Interacts with sad1. In terms of processing, phosphorylation by TORC1 upon nutrient replenishment inhibits STM1 and causes its release from dormant ribosomes.

It localises to the cytoplasm. Ribosome preservation factor that protect a small pool of nontranslating, vacant ribosomes in cells under nutrient starvation conditions. Under nutrient-limiting conditions, cells reduce ribosome biogenesis and degrade ribosomes via autophagy (ribophagy) or proteasomal degradation. To avoid excessive degradation during starvation, STM1 binds to and protects 80S ribosomes from proteasomal degradation. Under nutrient-sufficient conditions, TORC1 phosphorylates and inhibits STM1 to prevent formation of dormant 80S ribosomes. Acts as an inhibitor of mRNA translation by promoting ribosome hibernation: clamps the two ribosomal subunits, thereby preventing their dissociation, and inhibits translation by excluding mRNA-binding. Acts via its association with eEF2, promoting ribosome stabilization and storage in an inactive state. May also repress translation by preventing association of eEF3 with ribosomes. Binds specifically G4 quadruplex (these are four-stranded right-handed helices, stabilized by guanine base quartets) and purine motif triplex (characterized by a third, antiparallel purine-rich DNA strand located within the major groove of a homopurine stretch of duplex DNA) nucleic acid structures. These structures may be present at telomeres or in rRNAs. Extends chronological lifespan when overexpressed. The polypeptide is Ribosome-associated protein oga1 (Schizosaccharomyces pombe (strain 972 / ATCC 24843) (Fission yeast)).